Consider the following 160-residue polypeptide: Cyclic pyranopterin monophosphate synthase (160 aa).

Substrate-binding positions include 76 to 78 and 114 to 115; these read LCH and ME. The active site involves D129.

It belongs to the MoaC family. In terms of assembly, homohexamer; trimer of dimers.

It catalyses the reaction (8S)-3',8-cyclo-7,8-dihydroguanosine 5'-triphosphate = cyclic pyranopterin phosphate + diphosphate. Its pathway is cofactor biosynthesis; molybdopterin biosynthesis. Functionally, catalyzes the conversion of (8S)-3',8-cyclo-7,8-dihydroguanosine 5'-triphosphate to cyclic pyranopterin monophosphate (cPMP). The protein is Cyclic pyranopterin monophosphate synthase of Saccharophagus degradans (strain 2-40 / ATCC 43961 / DSM 17024).